The following is a 456-amino-acid chain: Sensitive to high expression protein 9, mitochondrial (456 aa).

A mitochondrion-targeting transit peptide spans 1–30 (MLRYYGATRNLPLVFSINKLMLRASSFTRP). The Mitochondrial matrix segment spans residues 31–296 (FHYSSYSLQN…WSDKIRRTST (266 aa)). Coiled-coil stretches lie at residues 71 to 128 (QHLK…KDEL) and 178 to 277 (IQKL…YRAI). The chain crosses the membrane as a helical span at residues 297–317 (WGTFILMGMNIFLFIVLQLLL). The Mitochondrial intermembrane segment spans residues 318 to 435 (EPWKRKRLVG…KLDAPLVFDT (118 aa)). Residues 436-456 (LEFYLYSISLVSMTILVSGLI) form a helical membrane-spanning segment.

This sequence belongs to the SHE9 family. In terms of assembly, homooligomer. Participates in a complex of about 300 kDa.

It is found in the mitochondrion inner membrane. In terms of biological role, required for the maintenance of the structure of the mitochondrial inner membrane. Involved in mitochondrial morphology. Causes growth arrest when highly overexpressed. This chain is Sensitive to high expression protein 9, mitochondrial (SHE9), found in Saccharomyces cerevisiae (strain ATCC 204508 / S288c) (Baker's yeast).